Consider the following 338-residue polypeptide: Ketol-acid reductoisomerase (NADP(+)) (338 aa).

Positions 1-181 constitute a KARI N-terminal Rossmann domain; that stretch reads MKVYYDKDAD…GGTKGGVIET (181 aa). NADP(+)-binding positions include 24–27, Arg-47, Ser-52, and 82–85; these read YGSQ and DETQ. His-107 is a catalytic residue. An NADP(+)-binding site is contributed by Gly-133. The KARI C-terminal knotted domain occupies 182–327; it reads SFREETETDL…AELRAMMPWI (146 aa). Asp-190, Glu-194, Glu-226, and Glu-230 together coordinate Mg(2+). Substrate is bound at residue Ser-251.

This sequence belongs to the ketol-acid reductoisomerase family. Mg(2+) serves as cofactor.

It catalyses the reaction (2R)-2,3-dihydroxy-3-methylbutanoate + NADP(+) = (2S)-2-acetolactate + NADPH + H(+). The catalysed reaction is (2R,3R)-2,3-dihydroxy-3-methylpentanoate + NADP(+) = (S)-2-ethyl-2-hydroxy-3-oxobutanoate + NADPH + H(+). It functions in the pathway amino-acid biosynthesis; L-isoleucine biosynthesis; L-isoleucine from 2-oxobutanoate: step 2/4. It participates in amino-acid biosynthesis; L-valine biosynthesis; L-valine from pyruvate: step 2/4. Functionally, involved in the biosynthesis of branched-chain amino acids (BCAA). Catalyzes an alkyl-migration followed by a ketol-acid reduction of (S)-2-acetolactate (S2AL) to yield (R)-2,3-dihydroxy-isovalerate. In the isomerase reaction, S2AL is rearranged via a Mg-dependent methyl migration to produce 3-hydroxy-3-methyl-2-ketobutyrate (HMKB). In the reductase reaction, this 2-ketoacid undergoes a metal-dependent reduction by NADPH to yield (R)-2,3-dihydroxy-isovalerate. In Laribacter hongkongensis (strain HLHK9), this protein is Ketol-acid reductoisomerase (NADP(+)).